Here is a 1407-residue protein sequence, read N- to C-terminus: YEATS domain-containing protein 2 (1407 aa).

Residue Lys-9 forms a Glycyl lysine isopeptide (Lys-Gly) (interchain with G-Cter in SUMO2) linkage. Positions 54–80 form a coiled coil; that stretch reads MKNKEHEIDVIDQRLIEARRMMDKLRA. A Glycyl lysine isopeptide (Lys-Gly) (interchain with G-Cter in SUMO2) cross-link involves residue Lys-113. Positions 116 to 196 are disordered; that stretch reads LESPSRSSSP…SHKRELRNAD (81 aa). Phosphoserine occurs at positions 118, 120, and 157. The segment covering 119 to 148 has biased composition (polar residues); it reads PSRSSSPTNQRSETPSANHSESDSLSQHND. The span at 149 to 165 shows a compositional bias: basic and acidic residues; that stretch reads FLSDKDNNSNVDVEERP. Lys-189 participates in a covalent cross-link: Glycyl lysine isopeptide (Lys-Gly) (interchain with G-Cter in SUMO2). Positions 201 to 346 constitute a YEATS domain; the sequence is ETSRLFVKKT…EDSVYPQSSE (146 aa). Histone H3K27cr binding stretches follow at residues 260-262 and 283-285; these read HPS and WGE. Thr-406 carries the post-translational modification Phosphothreonine. A phosphoserine mark is found at Ser-446, Ser-462, Ser-464, Ser-470, and Ser-472. The disordered stretch occupies residues 462–540; that stretch reads SGSPISTPSP…GTGSPIPKIH (79 aa). Thr-477 bears the Phosphothreonine mark. Lys-486 participates in a covalent cross-link: Glycyl lysine isopeptide (Lys-Gly) (interchain with G-Cter in SUMO2). Positions 511 to 520 are enriched in low complexity; sequence STPSTGSPTS. At Ser-534 the chain carries Phosphoserine. A Glycyl lysine isopeptide (Lys-Gly) (interchain with G-Cter in SUMO2) cross-link involves residue Lys-550. At Ser-573 the chain carries Phosphoserine. Lys-590 participates in a covalent cross-link: Glycyl lysine isopeptide (Lys-Gly) (interchain with G-Cter in SUMO2). Ser-625 is modified (phosphoserine). Glycyl lysine isopeptide (Lys-Gly) (interchain with G-Cter in SUMO2) cross-links involve residues Lys-647 and Lys-771. Positions 791–833 are disordered; that stretch reads SGSAAAGGSGSSGAGGGSGGGGGSGAGGTPSTSGPGGGPQHLT. Positions 795 to 829 are enriched in gly residues; sequence AAGGSGSSGAGGGSGGGGGSGAGGTPSTSGPGGGP. Residue Lys-908 forms a Glycyl lysine isopeptide (Lys-Gly) (interchain with G-Cter in SUMO2) linkage. A Glycyl lysine isopeptide (Lys-Gly) (interchain with G-Cter in SUMO1); alternate cross-link involves residue Lys-1095. Lys-1095 is covalently cross-linked (Glycyl lysine isopeptide (Lys-Gly) (interchain with G-Cter in SUMO2); alternate). Residue Lys-1115 forms a Glycyl lysine isopeptide (Lys-Gly) (interchain with G-Cter in SUMO2) linkage. Phosphothreonine is present on Thr-1204. Residues Lys-1207 and Lys-1270 each participate in a glycyl lysine isopeptide (Lys-Gly) (interchain with G-Cter in SUMO2) cross-link.

As to quaternary structure, component of the ADA2A-containing complex (ATAC), composed of KAT14, KAT2A, TADA2L, TADA3L, ZZ3, MBIP, WDR5, YEATS2, SGF29 and DR1.

The protein resides in the nucleus. Chromatin reader component of the ATAC complex, a complex with histone acetyltransferase activity on histones H3 and H4. YEATS2 specifically recognizes and binds histone H3 crotonylated at 'Lys-27' (H3K27cr). Crotonylation marks active promoters and enhancers and confers resistance to transcriptional repressors. The polypeptide is YEATS domain-containing protein 2 (Mus musculus (Mouse)).